The chain runs to 101 residues: Small nuclear ribonucleoprotein Sm D3 (101 aa).

The Sm domain maps to 6–78 (IPVKLLNEAQ…IKFIVVPDLL (73 aa)).

The protein belongs to the snRNP core protein family. In terms of assembly, component of the Sm core complex, present in spliceosomal snRNP U1, U2, U4/U6 and U5. The core complex contains SMB1, SMD1, SMD2, SMD3, SME1, SMX3 and SMX2 (Sm proteins B, D1, D2, D3, E, F and G, respectively), and is probably a heptameric ring structure. SMD3 specifically interacts with SMB1. Belongs to the CWC complex (or CEF1-associated complex), a spliceosome sub-complex reminiscent of a late-stage spliceosome composed of the U2, U5 and U6 snRNAs and at least BUD13, BUD31, BRR2, CDC40, CEF1, CLF1, CUS1, CWC2, CWC15, CWC21, CWC22, CWC23, CWC24, CWC25, CWC27, ECM2, HSH155, IST3, ISY1, LEA1, MSL1, NTC20, PRP8, PRP9, PRP11, PRP19, PRP21, PRP22, PRP45, PRP46, SLU7, SMB1, SMD1, SMD2, SMD3, SMX2, SMX3, SNT309, SNU114, SPP2, SYF1, SYF2, RSE1 and YJU2. Component of the U4/U6-U5 tri-snRNP complex composed of the U4, U6 and U5 snRNAs and at least PRP3, PRP4, PRP6, PRP8, PRP18, PRP31, PRP38, SNU13, SNU23, SNU66, SNU114, SPP381, SMB1, SMD1, SMD2, SMD3, SMX2, SMX3, LSM2, LSM3, LSM4, LSM5, LSM6, LSM7, LSM8, BRR2 and DIB1.

The protein resides in the cytoplasm. It localises to the cytosol. The protein localises to the nucleus. Functionally, plays a role in pre-mRNA splicing as a core component of the spliceosomal U1, U2, U4 and U5 small nuclear ribonucleoproteins (snRNPs), the building blocks of the spliceosome. Also binds telomerase RNA and is required for its accumulation. The chain is Small nuclear ribonucleoprotein Sm D3 (SMD3) from Saccharomyces cerevisiae (strain ATCC 204508 / S288c) (Baker's yeast).